The chain runs to 110 residues: U32-theraphotoxin-Cg1a (110 aa).

Positions 1 to 19 (MKHCFLILFTLIVFTVVWS) are cleaved as a signal peptide. Residues 20–43 (LEENEEYPDEDEMIESFMDGYSYR) constitute a propeptide that is removed on maturation. Disulfide bonds link Cys-49–Cys-63, Cys-56–Cys-69, Cys-60–Cys-105, and Cys-62–Cys-80.

This sequence belongs to the neurotoxin 03 (Tx2) family. 02 subfamily. In terms of tissue distribution, expressed by the venom gland.

The protein resides in the secreted. In terms of biological role, probable ion channel inhibitor. The protein is U32-theraphotoxin-Cg1a of Chilobrachys guangxiensis (Chinese earth tiger tarantula).